Reading from the N-terminus, the 297-residue chain is Phosphate import ATP-binding protein PstB (297 aa).

The ABC transporter domain maps to 50–292; the sequence is MRLRDVEVFY…PEHDLTEAYI (243 aa). 82–89 is a binding site for ATP; that stretch reads GPSGCGKS.

The protein belongs to the ABC transporter superfamily. Phosphate importer (TC 3.A.1.7) family. In terms of assembly, the complex is composed of two ATP-binding proteins (PstB), two transmembrane proteins (PstC and PstA) and a solute-binding protein (PstS).

It is found in the cell inner membrane. It carries out the reaction phosphate(out) + ATP + H2O = ADP + 2 phosphate(in) + H(+). Functionally, part of the ABC transporter complex PstSACB involved in phosphate import. Responsible for energy coupling to the transport system. This Alcanivorax borkumensis (strain ATCC 700651 / DSM 11573 / NCIMB 13689 / SK2) protein is Phosphate import ATP-binding protein PstB.